Reading from the N-terminus, the 458-residue chain is UDP-N-acetylmuramate--L-alanine ligase (458 aa).

118–124 (GTHGKTT) serves as a coordination point for ATP.

It belongs to the MurCDEF family.

It is found in the cytoplasm. It catalyses the reaction UDP-N-acetyl-alpha-D-muramate + L-alanine + ATP = UDP-N-acetyl-alpha-D-muramoyl-L-alanine + ADP + phosphate + H(+). It participates in cell wall biogenesis; peptidoglycan biosynthesis. In terms of biological role, cell wall formation. In Clostridium botulinum (strain Okra / Type B1), this protein is UDP-N-acetylmuramate--L-alanine ligase.